Consider the following 62-residue polypeptide: Zinc finger-containing protein P28b (62 aa).

The RING-type; degenerate zinc finger occupies 1–46 (MKLFTQNDRYFGLLDSCTHIFCITCINIWHKTRRETGASDNCPICR).

The chain is Zinc finger-containing protein P28b from Vaccinia virus (strain Western Reserve) (VACV).